Consider the following 201-residue polypeptide: Glycerol-3-phosphate acyltransferase (201 aa).

The next 6 membrane-spanning stretches (helical) occupy residues 3–23, 51–71, 85–105, 116–136, 137–157, and 158–178; these read TVLF…VVVS, KAAI…VWLV, VALV…FRFV, VLLA…LVIA, YAFR…PFYY, and GLLF…ILLV.

The protein belongs to the PlsY family. Probably interacts with PlsX.

It is found in the cell inner membrane. The enzyme catalyses an acyl phosphate + sn-glycerol 3-phosphate = a 1-acyl-sn-glycero-3-phosphate + phosphate. It functions in the pathway lipid metabolism; phospholipid metabolism. Catalyzes the transfer of an acyl group from acyl-phosphate (acyl-PO(4)) to glycerol-3-phosphate (G3P) to form lysophosphatidic acid (LPA). This enzyme utilizes acyl-phosphate as fatty acyl donor, but not acyl-CoA or acyl-ACP. This is Glycerol-3-phosphate acyltransferase from Janthinobacterium sp. (strain Marseille) (Minibacterium massiliensis).